We begin with the raw amino-acid sequence, 180 residues long: Large ribosomal subunit protein uL5 (180 aa).

This sequence belongs to the universal ribosomal protein uL5 family. Part of the 50S ribosomal subunit; part of the 5S rRNA/L5/L18/L25 subcomplex. Contacts the 5S rRNA and the P site tRNA. Forms a bridge to the 30S subunit in the 70S ribosome.

Its function is as follows. This is one of the proteins that bind and probably mediate the attachment of the 5S RNA into the large ribosomal subunit, where it forms part of the central protuberance. In the 70S ribosome it contacts protein S13 of the 30S subunit (bridge B1b), connecting the 2 subunits; this bridge is implicated in subunit movement. Contacts the P site tRNA; the 5S rRNA and some of its associated proteins might help stabilize positioning of ribosome-bound tRNAs. The protein is Large ribosomal subunit protein uL5 of Symbiobacterium thermophilum (strain DSM 24528 / JCM 14929 / IAM 14863 / T).